A 189-amino-acid polypeptide reads, in one-letter code: Interferon alpha-A (189 aa).

An N-terminal signal peptide occupies residues 1–23 (MAPAWSFLLSLLLLSCNAICSLG). Disulfide bonds link Cys-24-Cys-122 and Cys-52-Cys-162.

The protein belongs to the alpha/beta interferon family.

The protein localises to the secreted. Produced by macrophages, IFN-alpha have antiviral activities. Interferon stimulates the production of two enzymes: a protein kinase and an oligoadenylate synthetase. This chain is Interferon alpha-A (IFNAA), found in Bos taurus (Bovine).